A 428-amino-acid chain; its full sequence is Putative ankyrin repeat protein FPV234 (428 aa).

ANK repeat units follow at residues 6-35, 39-68, 71-100, 103-132, 137-169, 174-202, 206-238, and 242-271; these read KDDI…DPNV, YQYS…DPNI, FFTP…IVNL, YCLK…DINS, NGKY…DINK, TNTS…NINI, MGRN…DINA, and EGNT…YLSY.

The sequence is that of Putative ankyrin repeat protein FPV234 from Fowlpox virus (strain NVSL) (FPV).